The following is a 566-amino-acid chain: Putative ankyrin repeat protein RF_0987 (566 aa).

Disordered stretches follow at residues 61–118 (KKKN…HENS), 276–314 (PPVMPTNQPSTQPITPPSPNTPVTTPSKVVPTTDSSAEI), and 355–392 (VNNNQTTNNQEKSPPVSSSNVTIQKQDDKVNNETSEST). A compositionally biased stretch (basic and acidic residues) spans 78–92 (NQEEPKLASQEHTEA). Positions 101 to 112 (TGNTALPSVTAS) are enriched in polar residues. The segment covering 296-308 (TPVTTPSKVVPTT) has biased composition (low complexity). The segment covering 365–378 (EKSPPVSSSNVTIQ) has biased composition (polar residues). 2 ANK repeats span residues 506-535 (SGETLLTAAIYNDNYYLAKFLVIRGIKIST) and 539-566 (ECQYPLDIALAQGNANIACMLIKAKGYQ).

The chain is Putative ankyrin repeat protein RF_0987 from Rickettsia felis (strain ATCC VR-1525 / URRWXCal2) (Rickettsia azadi).